The chain runs to 410 residues: Putative F-box/kelch-repeat protein At1g15680 (410 aa).

In terms of domain architecture, F-box spans 13–58 (CKRRIELPEELLAEIVARLPFISITRFKSVCKGWRSLIESTYFRHL). 2 Kelch repeats span residues 177-227 (VVCM…SLKK) and 274-327 (AYTT…YFPV).

This is Putative F-box/kelch-repeat protein At1g15680 from Arabidopsis thaliana (Mouse-ear cress).